The following is a 253-amino-acid chain: CD151 antigen (253 aa).

The Cytoplasmic segment spans residues 1 to 18; sequence MGEFNEKKTTCGTVCLKY. S-palmitoyl cysteine attachment occurs at residues C11 and C15. A helical membrane pass occupies residues 19–39; that stretch reads LLFTYNCCFWLAGLAVMAVGI. Residues 40–57 lie on the Extracellular side of the membrane; it reads WTLALKSDYISLLASGTY. A helical membrane pass occupies residues 58-78; the sequence is LATAYILVVAGAVVMVTGVLG. Residues 79 to 91 lie on the Cytoplasmic side of the membrane; that stretch reads CCATFKERRNLLR. Residues 92–112 traverse the membrane as a helical segment; it reads LYFILLLIIFLLEIIAGVLAY. Over 113-221 the chain is Extracellular; that stretch reads VYYQQLNTEL…LETFIQEHLR (109 aa). N159 carries N-linked (GlcNAc...) asparagine glycosylation. A helical membrane pass occupies residues 222–242; it reads VIGAVGTGIACVQVFGMIFTC. Residues C242 and C243 are each lipidated (S-palmitoyl cysteine). The Cytoplasmic segment spans residues 243–253; the sequence is CLYRSLKLEHY.

The protein belongs to the tetraspanin (TM4SF) family. As to quaternary structure, interacts with integrins ITGA3:ITGB1, ITGA5:ITGB1, ITGA3:ITGB1 and ITGA6:ITGB4 and with CD9 and CD181. Interacts (via the second extracellular domain) with integrin ITGAV:ITGB3. Interacts with ITGA3; this interaction modulates ITGA3 glycosylation pattern. Interacts with F11R. Interacts with RAC1 and CDC42; these interactions mediate physical association of RAC1 and CDC42 with integrin adhesion receptor complexes. Post-translationally, palmitoylated. Palmitoylation by ZDHHC2 regulates CD151 expression, association with other tetraspanin family proteins and function in cell adhesion. Ubiquitinated by RNF128 on lysine residues present in the tetraspanin amino terminus via 'Lys-48'-linked ubiquitin leading to proteasomal degradation.

It is found in the cell membrane. Its function is as follows. Structural component of specialized membrane microdomains known as tetraspanin-enriched microdomains (TERMs), which act as platforms for receptor clustering and signaling. Plays a role in various cellular and molecular mechanism through its association with both integrin and non-integrin proteins. These interactions facilitate critical cellular functions, including cell-to-cell communication, wound healing, platelet aggregation, trafficking, cell motility, and angiogenesis. Via interaction with JAM-A/F11R and integrin ITGA3:ITGB1, promotes the recruitment of signaling molecules such as RAC1, CDC42 and RhoGTPases to facilitate the polarization of epithelial cells and the reorganization of the actin cytoskeleton, which are critical steps in cell migration process. Regulates the glycosylation pattern of ITGA3:ITGB1 thereby modulating its activity. Plays an essential role in the maintenance of central laminin-binding integrin ITGA6:ITGB4-containing adhesion complexes. Essential for the proper assembly of the glomerular and tubular basement membranes in kidney. Contributes to T-cell activation by modulating integrin signaling leading to activation of downstream targets PTK2 and MAPK1/MAPK3. This is CD151 antigen (CD151) from Chlorocebus aethiops (Green monkey).